The sequence spans 66 residues: Probable Sec-independent protein translocase protein TatE (66 aa).

The chain crosses the membrane as a helical span at residues 1–21 (MEGISITKLLVIAVLIVLLFG). The disordered stretch occupies residues 46–66 (ETPAAKKSDGAEAAPRVENKE).

It belongs to the TatA/E family. TatE subfamily.

The protein localises to the cell inner membrane. Part of the twin-arginine translocation (Tat) system that transports large folded proteins containing a characteristic twin-arginine motif in their signal peptide across membranes. TatE shares overlapping functions with TatA. The chain is Probable Sec-independent protein translocase protein TatE from Edwardsiella piscicida.